The following is a 562-amino-acid chain: AT-rich interactive domain-containing protein 1 (562 aa).

The ARID domain occupies 43–136; the sequence is KELISLFRPL…YLDAFGRWLN (94 aa). An ELM2 domain is found at 358 to 448; sequence PCALVGSKFQ…KLELGPAFYM (91 aa).

The protein localises to the nucleus. This is AT-rich interactive domain-containing protein 1 (ARID1) from Arabidopsis thaliana (Mouse-ear cress).